Consider the following 692-residue polypeptide: Elongation factor G (692 aa).

In terms of domain architecture, tr-type G spans 9 to 284 (HMVRNIGIAA…AVVDYLPAPD (276 aa)). GTP-binding positions include 18–25 (AHIDAGKT), 82–86 (DTPGH), and 136–139 (NKMD).

The protein belongs to the TRAFAC class translation factor GTPase superfamily. Classic translation factor GTPase family. EF-G/EF-2 subfamily.

Its subcellular location is the cytoplasm. Catalyzes the GTP-dependent ribosomal translocation step during translation elongation. During this step, the ribosome changes from the pre-translocational (PRE) to the post-translocational (POST) state as the newly formed A-site-bound peptidyl-tRNA and P-site-bound deacylated tRNA move to the P and E sites, respectively. Catalyzes the coordinated movement of the two tRNA molecules, the mRNA and conformational changes in the ribosome. The sequence is that of Elongation factor G from Campylobacter curvus (strain 525.92).